The primary structure comprises 491 residues: MTALLDTFVSKIIENSDYAELDATYLSNRILALVGEDNAQQDTNQSNLIALKDELVDLAVVNGKVGDLAEEKDCLGAELMNFITPIPSQVNKAFWDTNAKSPQKAIKDFYELSKRNNYIKVTAIAKNIAFTTSSVYGDIDITINLSKPEKDPKAIAAAKLAKTSNYPKCQLCMENEGYQGRINYPARANHRIIRMNLGDEKWGFQYSPYAYFNEHCIFLNTEHVPMVISQNTFRQLLDIVDIFPGYFAGSNSDLPIVGGSILSHNHYQGGRHIFPMEIAELDSVFRFKDFPDVTAGIVKWPMSVIRLRGANKYSLVELAEIIRLAWRNYSDDTMNILAFTGDTPHHTVTPIARKRDGQFELDIVLRDNHTTAEYPDGVYHPHIDVQHIKKENIGLIEVMGLAILPPRLKKELAEVEKYVLNQYNEMADYHKDWADAIKASHPETSSETVSEIVKQAVGRTFVRVLEDAGVYKRNRQGQAAFMRFVESIGVK.

The protein belongs to the galactose-1-phosphate uridylyltransferase type 2 family.

The protein localises to the cytoplasm. It carries out the reaction alpha-D-galactose 1-phosphate + UDP-alpha-D-glucose = alpha-D-glucose 1-phosphate + UDP-alpha-D-galactose. Its pathway is carbohydrate metabolism; galactose metabolism. The protein is Galactose-1-phosphate uridylyltransferase (galT) of Streptococcus mutans serotype c (strain ATCC 700610 / UA159).